The primary structure comprises 520 residues: Dihydropyrimidinase 2 (520 aa).

3 residues coordinate Zn(2+): histidine 59, histidine 61, and lysine 152. An N6-carboxylysine modification is found at lysine 152. Residue tyrosine 157 participates in substrate binding. Positions 185 and 241 each coordinate Zn(2+). Substrate is bound at residue serine 291. A Zn(2+)-binding site is contributed by aspartate 319. Substrate is bound at residue asparagine 340.

It belongs to the metallo-dependent hydrolases superfamily. Hydantoinase/dihydropyrimidinase family. In terms of assembly, homotetramer. It depends on Zn(2+) as a cofactor. In terms of processing, carboxylation allows a single lysine to coordinate two zinc ions. In terms of tissue distribution, body wall muscles.

The enzyme catalyses 5,6-dihydrouracil + H2O = 3-(carbamoylamino)propanoate + H(+). The protein is Dihydropyrimidinase 2 (dhp-2) of Caenorhabditis elegans.